The sequence spans 219 residues: Phosphatidylserine decarboxylase proenzyme (219 aa).

Residue Ser-188 is the Schiff-base intermediate with substrate; via pyruvic acid of the active site. Ser-188 bears the Pyruvic acid (Ser); by autocatalysis mark.

The protein belongs to the phosphatidylserine decarboxylase family. PSD-A subfamily. As to quaternary structure, heterodimer of a large membrane-associated beta subunit and a small pyruvoyl-containing alpha subunit. Pyruvate serves as cofactor. Post-translationally, is synthesized initially as an inactive proenzyme. Formation of the active enzyme involves a self-maturation process in which the active site pyruvoyl group is generated from an internal serine residue via an autocatalytic post-translational modification. Two non-identical subunits are generated from the proenzyme in this reaction, and the pyruvate is formed at the N-terminus of the alpha chain, which is derived from the carboxyl end of the proenzyme. The post-translation cleavage follows an unusual pathway, termed non-hydrolytic serinolysis, in which the side chain hydroxyl group of the serine supplies its oxygen atom to form the C-terminus of the beta chain, while the remainder of the serine residue undergoes an oxidative deamination to produce ammonia and the pyruvoyl prosthetic group on the alpha chain.

The protein localises to the cell membrane. It carries out the reaction a 1,2-diacyl-sn-glycero-3-phospho-L-serine + H(+) = a 1,2-diacyl-sn-glycero-3-phosphoethanolamine + CO2. It participates in phospholipid metabolism; phosphatidylethanolamine biosynthesis; phosphatidylethanolamine from CDP-diacylglycerol: step 2/2. Functionally, catalyzes the formation of phosphatidylethanolamine (PtdEtn) from phosphatidylserine (PtdSer). This chain is Phosphatidylserine decarboxylase proenzyme, found in Citrifermentans bemidjiense (strain ATCC BAA-1014 / DSM 16622 / JCM 12645 / Bem) (Geobacter bemidjiensis).